A 336-amino-acid polypeptide reads, in one-letter code: Anthranilate phosphoribosyltransferase (336 aa).

5-phospho-alpha-D-ribose 1-diphosphate-binding positions include G82, 85 to 86 (GD), T90, 92 to 95 (NIST), 110 to 118 (KHGNRSVSS), and S122. G82 contacts anthranilate. Residue S94 participates in Mg(2+) binding. Position 113 (N113) interacts with anthranilate. R168 is an anthranilate binding site. Residues D227 and E228 each coordinate Mg(2+).

Belongs to the anthranilate phosphoribosyltransferase family. In terms of assembly, homodimer. Mg(2+) is required as a cofactor.

The enzyme catalyses N-(5-phospho-beta-D-ribosyl)anthranilate + diphosphate = 5-phospho-alpha-D-ribose 1-diphosphate + anthranilate. It participates in amino-acid biosynthesis; L-tryptophan biosynthesis; L-tryptophan from chorismate: step 2/5. Functionally, catalyzes the transfer of the phosphoribosyl group of 5-phosphorylribose-1-pyrophosphate (PRPP) to anthranilate to yield N-(5'-phosphoribosyl)-anthranilate (PRA). In Leptospira interrogans serogroup Icterohaemorrhagiae serovar Lai (strain 56601), this protein is Anthranilate phosphoribosyltransferase.